Here is a 102-residue protein sequence, read N- to C-terminus: Small ribosomal subunit protein uS10 (102 aa).

It belongs to the universal ribosomal protein uS10 family. Part of the 30S ribosomal subunit.

Involved in the binding of tRNA to the ribosomes. In Mycoplasma mobile (strain ATCC 43663 / 163K / NCTC 11711) (Mesomycoplasma mobile), this protein is Small ribosomal subunit protein uS10.